A 277-amino-acid polypeptide reads, in one-letter code: Phosphatidylserine decarboxylase proenzyme (277 aa).

Active-site charge relay system; for autoendoproteolytic cleavage activity residues include Asp88, His144, and Ser242. Ser242 serves as the catalytic Schiff-base intermediate with substrate; via pyruvic acid; for decarboxylase activity. Position 242 is a pyruvic acid (Ser); by autocatalysis (Ser242).

Belongs to the phosphatidylserine decarboxylase family. PSD-B subfamily. Prokaryotic type I sub-subfamily. In terms of assembly, heterodimer of a large membrane-associated beta subunit and a small pyruvoyl-containing alpha subunit. Pyruvate serves as cofactor. Post-translationally, is synthesized initially as an inactive proenzyme. Formation of the active enzyme involves a self-maturation process in which the active site pyruvoyl group is generated from an internal serine residue via an autocatalytic post-translational modification. Two non-identical subunits are generated from the proenzyme in this reaction, and the pyruvate is formed at the N-terminus of the alpha chain, which is derived from the carboxyl end of the proenzyme. The autoendoproteolytic cleavage occurs by a canonical serine protease mechanism, in which the side chain hydroxyl group of the serine supplies its oxygen atom to form the C-terminus of the beta chain, while the remainder of the serine residue undergoes an oxidative deamination to produce ammonia and the pyruvoyl prosthetic group on the alpha chain. During this reaction, the Ser that is part of the protease active site of the proenzyme becomes the pyruvoyl prosthetic group, which constitutes an essential element of the active site of the mature decarboxylase.

The protein resides in the cell membrane. The catalysed reaction is a 1,2-diacyl-sn-glycero-3-phospho-L-serine + H(+) = a 1,2-diacyl-sn-glycero-3-phosphoethanolamine + CO2. Its pathway is phospholipid metabolism; phosphatidylethanolamine biosynthesis; phosphatidylethanolamine from CDP-diacylglycerol: step 2/2. In terms of biological role, catalyzes the formation of phosphatidylethanolamine (PtdEtn) from phosphatidylserine (PtdSer). In Psychrobacter arcticus (strain DSM 17307 / VKM B-2377 / 273-4), this protein is Phosphatidylserine decarboxylase proenzyme.